The primary structure comprises 206 residues: Enterobactin synthase component D (206 aa).

Mg(2+) contacts are provided by aspartate 107, glutamate 109, and glutamate 152.

This sequence belongs to the P-Pant transferase superfamily. EntD family. In terms of assembly, entB, EntD, EntE, and EntF form a multienzyme complex called enterobactin synthase. Mg(2+) is required as a cofactor.

The protein resides in the membrane. The enzyme catalyses apo-[aryl-carrier protein] + CoA = holo-[aryl-carrier protein] + adenosine 3',5'-bisphosphate + H(+). It carries out the reaction apo-[peptidyl-carrier protein] + CoA = holo-[peptidyl-carrier protein] + adenosine 3',5'-bisphosphate + H(+). Its pathway is siderophore biosynthesis; enterobactin biosynthesis. In terms of biological role, involved in the biosynthesis of the siderophore enterobactin (enterochelin), which is a macrocyclic trimeric lactone of N-(2,3-dihydroxybenzoyl)-serine. The serine trilactone serves as a scaffolding for the three catechol functionalities that provide hexadentate coordination for the tightly ligated iron(2+) atoms. Plays an essential role in the assembly of the enterobactin by catalyzing the transfer of the 4'-phosphopantetheine (Ppant) moiety from coenzyme A to the apo-domains of both EntB (ArCP domain) and EntF (PCP domain) to yield their holo-forms which make them competent for the activation of 2,3-dihydroxybenzoate (DHB) and L-serine, respectively. In Escherichia coli O157:H7, this protein is Enterobactin synthase component D.